A 61-amino-acid chain; its full sequence is Protein TfaX (61 aa).

It belongs to the tfa family.

In terms of biological role, might play a role in cell growth during glycolysis. The protein is Protein TfaX (tfaX) of Escherichia coli (strain K12).